The primary structure comprises 307 residues: Coproporphyrin III ferrochelatase (307 aa).

Fe-coproporphyrin III is bound by residues Tyr12, Arg29, 45–46, Ser53, and Tyr124; that span reads RY. 2 residues coordinate Fe(2+): His181 and Glu263.

Belongs to the ferrochelatase family.

Its subcellular location is the cytoplasm. The enzyme catalyses Fe-coproporphyrin III + 2 H(+) = coproporphyrin III + Fe(2+). It functions in the pathway porphyrin-containing compound metabolism; protoheme biosynthesis. Functionally, involved in coproporphyrin-dependent heme b biosynthesis. Catalyzes the insertion of ferrous iron into coproporphyrin III to form Fe-coproporphyrin III. This chain is Coproporphyrin III ferrochelatase, found in Staphylococcus aureus (strain MRSA252).